We begin with the raw amino-acid sequence, 461 residues long: Putative ankyrin repeat protein FPV218 (461 aa).

12 ANK repeats span residues 1-28, 31-61, 65-94, 96-116, 120-149, 153-182, 186-213, 217-248, 250-277, 281-312, 358-385, and 431-460; these read MLSL…HPDS, KGFY…NPNN, ETVS…DTSL, PLYV…DVNV, ESRS…NVNV, KGLS…RVNI, LGRL…PIDI, NGST…ALDN, CNSP…DITI, CGNT…LMRE, NGPT…NVQY, and LPYE…LKNK.

In Fowlpox virus (strain NVSL) (FPV), this protein is Putative ankyrin repeat protein FPV218.